We begin with the raw amino-acid sequence, 479 residues long: Sulfate adenylyltransferase subunit 1 (479 aa).

The tr-type G domain occupies Lys-25–Arg-239. The segment at Gly-34–Ser-41 is G1. Gly-34–Ser-41 serves as a coordination point for GTP. Residues Gly-92–Asp-96 form a G2 region. Residues Asp-113–Gly-116 are G3. GTP is bound by residues Asp-113–His-117 and Asn-168–Asp-171. Residues Asn-168 to Asp-171 are G4. The segment at Ser-206 to Leu-208 is G5.

This sequence belongs to the TRAFAC class translation factor GTPase superfamily. Classic translation factor GTPase family. CysN/NodQ subfamily. Heterodimer composed of CysD, the smaller subunit, and CysN.

It catalyses the reaction sulfate + ATP + H(+) = adenosine 5'-phosphosulfate + diphosphate. It functions in the pathway sulfur metabolism; hydrogen sulfide biosynthesis; sulfite from sulfate: step 1/3. Functionally, with CysD forms the ATP sulfurylase (ATPS) that catalyzes the adenylation of sulfate producing adenosine 5'-phosphosulfate (APS) and diphosphate, the first enzymatic step in sulfur assimilation pathway. APS synthesis involves the formation of a high-energy phosphoric-sulfuric acid anhydride bond driven by GTP hydrolysis by CysN coupled to ATP hydrolysis by CysD. This is Sulfate adenylyltransferase subunit 1 from Salmonella choleraesuis (strain SC-B67).